A 353-amino-acid chain; its full sequence is Heat-inducible transcription repressor HrcA (353 aa).

The protein belongs to the HrcA family.

Its function is as follows. Negative regulator of class I heat shock genes (grpE-dnaK-dnaJ and groELS operons). Prevents heat-shock induction of these operons. The sequence is that of Heat-inducible transcription repressor HrcA from Anaeromyxobacter dehalogenans (strain 2CP-1 / ATCC BAA-258).